A 212-amino-acid polypeptide reads, in one-letter code: Translation initiation factor IF-3 (212 aa).

This sequence belongs to the IF-3 family. Monomer.

It localises to the cytoplasm. IF-3 binds to the 30S ribosomal subunit and shifts the equilibrium between 70S ribosomes and their 50S and 30S subunits in favor of the free subunits, thus enhancing the availability of 30S subunits on which protein synthesis initiation begins. In Synechococcus sp. (strain CC9311), this protein is Translation initiation factor IF-3.